The primary structure comprises 490 residues: GTPase Der (490 aa).

EngA-type G domains lie at 3–166 and 203–376; these read PVVA…MDDV and IKLA…DSST. GTP is bound by residues 9–16, 56–60, 118–121, 209–216, 256–260, and 321–324; these read GRPNVGKS, DTGGI, NKTD, DTAGV, and NKWD. The 85-residue stretch at 377-461 folds into the KH-like domain; it reads RRVSTAMLTR…PIRIQFKEGE (85 aa).

It belongs to the TRAFAC class TrmE-Era-EngA-EngB-Septin-like GTPase superfamily. EngA (Der) GTPase family. In terms of assembly, associates with the 50S ribosomal subunit.

Its function is as follows. GTPase that plays an essential role in the late steps of ribosome biogenesis. This is GTPase Der from Salmonella gallinarum (strain 287/91 / NCTC 13346).